The primary structure comprises 196 residues: UMP-CMP kinase (196 aa).

Gly13–Thr18 lines the ATP pocket. The tract at residues Ser33 to Val63 is NMP. A ribonucleoside 5'-phosphate contacts are provided by residues Arg39, Arg61–Val63, and Gly93–Arg96. Asn100 is a CMP binding site. The LID stretch occupies residues Glu133–Asp143. An ATP-binding site is contributed by Arg134. Residues Arg140 and Arg151 each contribute to the a ribonucleoside 5'-phosphate site. Position 179 (Lys179) interacts with ATP.

Belongs to the adenylate kinase family. UMP-CMP kinase subfamily. Monomer. Requires Mg(2+) as cofactor.

The protein localises to the cytoplasm. It localises to the nucleus. It catalyses the reaction CMP + ATP = CDP + ADP. It carries out the reaction dCMP + ATP = dCDP + ADP. The enzyme catalyses UMP + ATP = UDP + ADP. The catalysed reaction is a 2'-deoxyribonucleoside 5'-diphosphate + ATP = a 2'-deoxyribonucleoside 5'-triphosphate + ADP. It catalyses the reaction a ribonucleoside 5'-diphosphate + ATP = a ribonucleoside 5'-triphosphate + ADP. Its function is as follows. Catalyzes the phosphorylation of pyrimidine nucleoside monophosphates at the expense of ATP. Plays an important role in de novo pyrimidine nucleotide biosynthesis. Has preference for UMP and CMP as phosphate acceptors. Also displays broad nucleoside diphosphate kinase activity. The chain is UMP-CMP kinase (cmpk1) from Xenopus tropicalis (Western clawed frog).